The sequence spans 500 residues: NAD(P)H-quinone oxidoreductase subunit 2 B, chloroplastic (500 aa).

A run of 13 helical transmembrane segments spans residues 14-34 (SILP…IDLT), 41-61 (WLYF…LFQL), 78-98 (FNGI…PLSM), 116-136 (LTAT…IIFI), 166-186 (LLMG…LYGL), 211-231 (ISIV…LVPF), 242-262 (APTS…LALA), 277-297 (WHLI…FIAI), 305-325 (MLAY…IAGD), 335-355 (YMLF…LFGL), 376-396 (ASFL…AGFF), 409-429 (GLYL…YYYL), and 467-487 (IIIC…VIAI).

This sequence belongs to the complex I subunit 2 family. In terms of assembly, NDH is composed of at least 16 different subunits, 5 of which are encoded in the nucleus.

The protein resides in the plastid. It is found in the chloroplast thylakoid membrane. It carries out the reaction a plastoquinone + NADH + (n+1) H(+)(in) = a plastoquinol + NAD(+) + n H(+)(out). The catalysed reaction is a plastoquinone + NADPH + (n+1) H(+)(in) = a plastoquinol + NADP(+) + n H(+)(out). In terms of biological role, NDH shuttles electrons from NAD(P)H:plastoquinone, via FMN and iron-sulfur (Fe-S) centers, to quinones in the photosynthetic chain and possibly in a chloroplast respiratory chain. The immediate electron acceptor for the enzyme in this species is believed to be plastoquinone. Couples the redox reaction to proton translocation, and thus conserves the redox energy in a proton gradient. This is NAD(P)H-quinone oxidoreductase subunit 2 B, chloroplastic from Anthoceros angustus (Hornwort).